We begin with the raw amino-acid sequence, 650 residues long: Acetyl-coenzyme A synthetase (650 aa).

CoA contacts are provided by residues 191-194 (RGGR), threonine 311, and asparagine 335. ATP is bound by residues 387–389 (GEP), 411–416 (DTWWQT), aspartate 500, and arginine 515. Serine 523 contributes to the CoA binding site. Residue arginine 526 coordinates ATP. Valine 537, histidine 539, and valine 542 together coordinate Mg(2+). Position 584 (arginine 584) interacts with CoA. Residue lysine 609 is modified to N6-acetyllysine.

Belongs to the ATP-dependent AMP-binding enzyme family. It depends on Mg(2+) as a cofactor. Acetylated. Deacetylation by the SIR2-homolog deacetylase activates the enzyme.

The enzyme catalyses acetate + ATP + CoA = acetyl-CoA + AMP + diphosphate. Functionally, catalyzes the conversion of acetate into acetyl-CoA (AcCoA), an essential intermediate at the junction of anabolic and catabolic pathways. AcsA undergoes a two-step reaction. In the first half reaction, AcsA combines acetate with ATP to form acetyl-adenylate (AcAMP) intermediate. In the second half reaction, it can then transfer the acetyl group from AcAMP to the sulfhydryl group of CoA, forming the product AcCoA. The protein is Acetyl-coenzyme A synthetase of Shewanella putrefaciens (strain CN-32 / ATCC BAA-453).